A 260-amino-acid chain; its full sequence is Nuclear receptor subfamily 0 group B member 2 (260 aa).

An NR LBD domain is found at 16–260; it reads SHPTILYTLL…ELLEDMLLLR (245 aa). Arg57 bears the Symmetric dimethylarginine; by PRMT5 mark.

It belongs to the nuclear hormone receptor family. NR0 subfamily. Heterodimer; efficient DNA binding requires dimerization with another bHLH protein. Interacts (via N-terminus) with NEUROD1 (via N-terminus and C-terminus). Interacts with ID2. Interacts with NR1I3 and EID1. Interacts with RARA, RXRA, THRB, NR5A1, NR5A2, PPARA and PPARG. Interacts with RORG, NFIL3, NR1D1 and BHLHE41. Interacts with HNF4A; the resulting heterodimer is transcriptionally inactive. Interacts with DDX3X; this interaction disrupts the interaction between HNF4 and NR0B2/SHP that forms inactive heterodimers and enhances the formation of active HNF4 homodimers. Arginine methylation by PRMT5 enhances repression activity of metabolic genes in liver in response to bile acid signaling, by increasing interaction with cofactors. Detected in kidney, testis, heart and liver.

It is found in the cytoplasm. It localises to the nucleus. Functionally, transcriptional regulator that acts as a negative regulator of receptor-dependent signaling pathways. Specifically inhibits transactivation of the nuclear receptor with which it interacts. Inhibits transcriptional activity of NEUROD1 on E-box-containing promoter by interfering with the coactivation function of the p300/CBP-mediated transcription complex for NEUROD1. Essential component of the liver circadian clock which via its interaction with NR1D1 and RORG regulates NPAS2-mediated hepatic lipid metabolism. Regulates the circadian expression of cytochrome P450 (CYP) enzymes. Represses: NR5A2 and HNF4A to down-regulate CYP2C38, NFLI3 to up-regulate CYP2A5, BHLHE41/HNF1A axis to up-regulate CYP1A2, CYP2E1 and CYP3A11, and NR1D1 to up-regulate CYP2B10, CYP4A10 and CYP4A14. This Rattus norvegicus (Rat) protein is Nuclear receptor subfamily 0 group B member 2 (Nr0b2).